Here is a 122-residue protein sequence, read N- to C-terminus: ATP synthase epsilon chain (122 aa).

Belongs to the ATPase epsilon chain family. In terms of assembly, F-type ATPases have 2 components, CF(1) - the catalytic core - and CF(0) - the membrane proton channel. CF(1) has five subunits: alpha(3), beta(3), gamma(1), delta(1), epsilon(1). CF(0) has three main subunits: a, b and c.

The protein localises to the cell membrane. Its function is as follows. Produces ATP from ADP in the presence of a proton gradient across the membrane. The protein is ATP synthase epsilon chain of Rhodococcus opacus (strain B4).